A 424-amino-acid polypeptide reads, in one-letter code: Endo-beta-1,4-galactanase (424 aa).

Residues 1 to 26 form the signal peptide; sequence MKNVLAVFVVLIFVLGAFGTSGPAEA. Position 142–145 (142–145) interacts with substrate; it reads DPAK. Residue Glu190 is the Proton donor of the active site. Residues 229–230 and His263 contribute to the substrate site; that span reads TN. Glu288 acts as the Nucleophile in catalysis. Thr292 lines the substrate pocket. Residues Asp297, Asp299, His301, and Asn303 each coordinate Ca(2+). Substrate-binding residues include Lys307 and Asp384. Residues Ser392 and Asp395 each contribute to the Ca(2+) site.

The protein belongs to the glycosyl hydrolase 53 family. Ca(2+) serves as cofactor.

It catalyses the reaction The enzyme specifically hydrolyzes (1-&gt;4)-beta-D-galactosidic linkages in type I arabinogalactans.. Functionally, involved in galactan degradation. Degrades arabinose-free galactan to galactooligosaccharides, producing galactotetraose as the main product along with galactotriose, galactobiose, and galactose. May hydrolyze the beta-1,4-galactan linkages of the galactan portion of arabinogalactan type I, a pectic plant polysaccharide from which most of the arabinose has been removed. The sequence is that of Endo-beta-1,4-galactanase (ganB) from Bacillus licheniformis (strain ATCC 14580 / DSM 13 / JCM 2505 / CCUG 7422 / NBRC 12200 / NCIMB 9375 / NCTC 10341 / NRRL NRS-1264 / Gibson 46).